An 887-amino-acid polypeptide reads, in one-letter code: Valine--tRNA ligase (887 aa).

A 'HIGH' region motif is present at residues 47-57 (PNVTGALHMGH). The 'KMSKS' region motif lies at 527–531 (KMSKS). Lys530 provides a ligand contact to ATP. A coiled-coil region spans residues 817–885 (LVNVEEEEKR…LLASLEKIRK (69 aa)).

Belongs to the class-I aminoacyl-tRNA synthetase family. ValS type 1 subfamily. Monomer.

It localises to the cytoplasm. It catalyses the reaction tRNA(Val) + L-valine + ATP = L-valyl-tRNA(Val) + AMP + diphosphate. In terms of biological role, catalyzes the attachment of valine to tRNA(Val). As ValRS can inadvertently accommodate and process structurally similar amino acids such as threonine, to avoid such errors, it has a 'posttransfer' editing activity that hydrolyzes mischarged Thr-tRNA(Val) in a tRNA-dependent manner. The sequence is that of Valine--tRNA ligase from Geobacter sulfurreducens (strain ATCC 51573 / DSM 12127 / PCA).